The sequence spans 265 residues: PBSX phage terminase small subunit (265 aa).

The interval 241–265 (KQKAEKTDDSQEPIEIMIKRKERKS) is disordered.

The protein to B.subtilis YqaS and B.subtilis phage SPP1 terminase small subunit. In terms of assembly, dimer of a small and a large subunit.

Functionally, functions as a terminase. This chain is PBSX phage terminase small subunit (xtmA), found in Bacillus subtilis (strain 168).